The chain runs to 894 residues: Sorting nexin-14 (894 aa).

The PXA domain maps to 78–252 (SSKVDASLSE…LLIIFIDDSP (175 aa)). An RGS domain is found at 284-416 (ELKQIREQQD…CHSDEYFRQL (133 aa)). The residue at position 496 (serine 496) is a Phosphoserine. Positions 518–638 (PYVDFFEDPS…DFLSPNGGET (121 aa)) constitute a PX domain.

The protein belongs to the sorting nexin family.

It is found in the cytoplasm. It localises to the cell projection. The protein localises to the dendrite. Its function is as follows. Plays a role in maintaining normal neuronal excitability and synaptic transmission. May be involved in several stages of intracellular trafficking. The protein is Sorting nexin-14 (SNX14) of Pongo abelii (Sumatran orangutan).